Here is a 216-residue protein sequence, read N- to C-terminus: MRPFTKHTGLAAPLDLANVDTDMIIPKQFLKSIKRTGFGKNLFDELRYEDEGQPDQECDGRPLRKDFVLNQDRYKGASVLLARQNFGCGSSREHAPWALDDYGFRSIIAPSFADIFYNNCFKNGLLPIVLQAEEVDQLFAEVALREGAQVIVDLENQTVSSPSGATFEFNVDNFRKHCLLNGLDDIGLTLQQDAAIRRYEEKRMNDAPWLFLPRGQ.

Belongs to the LeuD family. LeuD type 1 subfamily. As to quaternary structure, heterodimer of LeuC and LeuD.

It catalyses the reaction (2R,3S)-3-isopropylmalate = (2S)-2-isopropylmalate. The protein operates within amino-acid biosynthesis; L-leucine biosynthesis; L-leucine from 3-methyl-2-oxobutanoate: step 2/4. Catalyzes the isomerization between 2-isopropylmalate and 3-isopropylmalate, via the formation of 2-isopropylmaleate. The chain is 3-isopropylmalate dehydratase small subunit from Marinomonas sp. (strain MWYL1).